The chain runs to 832 residues: Tuftelin-interacting protein 11 (832 aa).

2 disordered regions span residues 1–21 and 33–145; these read MSMSHLYGRRGDEEEEDGVEI and NEFN…GNWE. Basic and acidic residues-rich tracts occupy residues 36–49 and 88–99; these read NPDRRRYRQTKEEA and TAAEEKAEREGS. Residues 121 to 130 show a composition bias toward polar residues; sequence TGGSFKTSQR. Positions 148 to 194 constitute a G-patch domain; that stretch reads TRGIGQKLLQKMGYVPGKGLGKNAQGIVNPIEAKLRKGKGAVGAYGS. Residue S209 is modified to Phosphoserine.

The protein belongs to the TFP11/STIP family. As to quaternary structure, identified in the spliceosome C complex.

Its subcellular location is the nucleus. Functionally, involved in pre-mRNA splicing, specifically in spliceosome disassembly during late-stage splicing events. The polypeptide is Tuftelin-interacting protein 11 (tfip11) (Danio rerio (Zebrafish)).